Reading from the N-terminus, the 187-residue chain is Large ribosomal subunit protein uL5 (187 aa).

The protein belongs to the universal ribosomal protein uL5 family. In terms of assembly, part of the 50S ribosomal subunit; part of the 5S rRNA/L5/L18/L25 subcomplex. Contacts the 5S rRNA and the P site tRNA. Forms a bridge to the 30S subunit in the 70S ribosome.

Its function is as follows. This is one of the proteins that bind and probably mediate the attachment of the 5S RNA into the large ribosomal subunit, where it forms part of the central protuberance. In the 70S ribosome it contacts protein S13 of the 30S subunit (bridge B1b), connecting the 2 subunits; this bridge is implicated in subunit movement. Contacts the P site tRNA; the 5S rRNA and some of its associated proteins might help stabilize positioning of ribosome-bound tRNAs. The sequence is that of Large ribosomal subunit protein uL5 from Mycolicibacterium smegmatis (strain ATCC 700084 / mc(2)155) (Mycobacterium smegmatis).